The following is a 377-amino-acid chain: All-trans-retinol dehydrogenase [NAD(+)] ADH4 (377 aa).

Cysteine 47 contributes to the Zn(2+) binding site. Proline 48–threonine 49 serves as a coordination point for NAD(+). The Zn(2+) site is built by histidine 68, cysteine 98, cysteine 101, cysteine 104, cysteine 112, and cysteine 179. NAD(+) is bound by residues glycine 204–glycine 209, aspartate 228, lysine 233, valine 297–alanine 299, threonine 320–phenylalanine 322, and arginine 372.

Belongs to the zinc-containing alcohol dehydrogenase family. Class-II subfamily. Dimer. Requires Zn(2+) as cofactor. As to expression, liver specific.

It localises to the cytoplasm. It catalyses the reaction all-trans-retinol + NAD(+) = all-trans-retinal + NADH + H(+). The catalysed reaction is 9-cis-retinol + NAD(+) = 9-cis-retinal + NADH + H(+). The enzyme catalyses 20-oxo-(5Z,8Z,11Z,14Z)-eicosatetraenoate + NAD(+) + H2O = (5Z,8Z,11Z,14Z)-eicosatetraenedioate + NADH + 2 H(+). It carries out the reaction 20-hydroxy-(5Z,8Z,11Z,14Z)-eicosatetraenoate + NAD(+) = 20-oxo-(5Z,8Z,11Z,14Z)-eicosatetraenoate + NADH + H(+). It catalyses the reaction 1,4-benzoquinone + NADH + H(+) = hydroquinone + NAD(+). With respect to regulation, oxidation of 20-HETE is inhibited by low concentrations of N-heptylformamide. Oxidation of 20-HETE is a decreased by 55-65% by either all-trans-retinol or all-trans-retinoic acid. Strongly inhibited by omega-hydroxy fatty acids. In terms of biological role, catalyzes the NAD-dependent oxidation of either all-trans-retinol or 9-cis-retinol. Also oxidizes long chain omega-hydroxy fatty acids, such as 20-HETE, producing both the intermediate aldehyde, 20-oxoarachidonate and the end product, a dicarboxylic acid, (5Z,8Z,11Z,14Z)-eicosatetraenedioate. Also catalyzes the reduction of benzoquinones. The polypeptide is All-trans-retinol dehydrogenase [NAD(+)] ADH4 (Rattus norvegicus (Rat)).